A 378-amino-acid chain; its full sequence is Putative odorant receptor 71a (378 aa).

Residues 1–37 (MDYDRIRPVRFLTGVLKWWRLWPRKESVSTPDWTNWQ) lie on the Cytoplasmic side of the membrane. The chain crosses the membrane as a helical span at residues 38 to 58 (AYALHVPFTFLFVLLLWLEAI). At 59 to 66 (KSRDIQHT) the chain is on the extracellular side. Residues 67-87 (ADVLLICLTTTALGGKVINIW) form a helical membrane-spanning segment. At 88-127 (KYAHVAQGILSEWSTWDLFELRSKQEVDMWRFEHRRFNRV) the chain is on the cytoplasmic side. The helical transmembrane segment at 128 to 148 (FMFYCLCSAGVIPFIVIQPLF) threads the bilayer. At 149–166 (DIPNRLPFWMWTPFDWQQ) the chain is on the extracellular side. Residues 167–187 (PVLFWYAFIYQATTIPIACAC) form a helical membrane-spanning segment. The Cytoplasmic segment spans residues 188-255 (NVTMDAVNWY…IFISKSTFTQ (68 aa)). A helical transmembrane segment spans residues 256-276 (ILVSSLIICFTIYSMQMSPVL). At 277-280 (QDLP) the chain is on the extracellular side. The helical transmembrane segment at 281 to 301 (GFAAMMQYLVAMIMQVMLPTI) threads the bilayer. Topologically, residues 302–343 (YGNAVIDSANMLTDSMYNSDWPDMNCRMRRLVLMFMVYLNRP) are cytoplasmic. A helical membrane pass occupies residues 344–364 (VTLKAGGFFHIGLPLFTKTMN). Over 365 to 378 (QAYSLLALLLNMNQ) the chain is Extracellular.

Belongs to the insect chemoreceptor superfamily. Heteromeric odorant receptor channel (TC 1.A.69) family. Or2a subfamily. Interacts with Orco. Complexes exist early in the endomembrane system in olfactory sensory neurons (OSNs), coupling these complexes to the conserved ciliary trafficking pathway. Expressed in olfactory sensory neurons in the maxillary palp.

It localises to the cell membrane. In terms of biological role, odorant receptor which mediates acceptance or avoidance behavior, depending on its substrates. The odorant receptor repertoire encodes a large collection of odor stimuli that vary widely in identity, intensity, and duration. May form a complex with Orco to form odorant-sensing units, providing sensitive and prolonged odorant signaling and calcium permeability. The sequence is that of Putative odorant receptor 71a (Or71a) from Drosophila melanogaster (Fruit fly).